We begin with the raw amino-acid sequence, 314 residues long: MVKKNFIPSVSLVRRDLPTLVTTTTSSTALSKPTSSVVSETSSKSLPSLTSSAFSTSSGTTSSSSLIVASITPPSTVGNPFILNAADKPNGTVYIAVGAVIGAIFISILIWWLVSNYLSRRFTMTNSYANDSKNLYRGHHKHSSSLQSNPFDINDEKSYMQDDWDSMSQLESSQYEDAASPFNPIQDPFTDNRRSLFISPTLQVSQYEKSHSRHQSKDTNIFIDDPSLYVGTYLEEEEEEERKLNLNRPQRAASPERKEKKINSMEGYHKRNQSSLGLIPVASATSNTSSPKKAHKRQAPSMFLDDVLNGREII.

Positions 32 to 61 are disordered; the sequence is KPTSSVVSETSSKSLPSLTSSAFSTSSGTT. A helical transmembrane segment spans residues 93–113; the sequence is VYIAVGAVIGAIFISILIWWL. Phosphoserine occurs at positions 148, 254, and 274. Residues 240–309 form a disordered region; it reads EERKLNLNRP…PSMFLDDVLN (70 aa). Residues 254-269 show a composition bias toward basic and acidic residues; sequence SPERKEKKINSMEGYH.

The protein belongs to the PRM5 family.

The protein localises to the vacuole membrane. This Saccharomyces cerevisiae (strain YJM789) (Baker's yeast) protein is Vacuolar membrane protein SCY_4732.